We begin with the raw amino-acid sequence, 79 residues long: Small ribosomal subunit protein bS18 (79 aa).

This sequence belongs to the bacterial ribosomal protein bS18 family. Part of the 30S ribosomal subunit. Forms a tight heterodimer with protein bS6.

Functionally, binds as a heterodimer with protein bS6 to the central domain of the 16S rRNA, where it helps stabilize the platform of the 30S subunit. This is Small ribosomal subunit protein bS18 from Streptococcus thermophilus (strain CNRZ 1066).